The sequence spans 132 residues: ATP synthase epsilon chain, chloroplastic (132 aa).

The protein belongs to the ATPase epsilon chain family. F-type ATPases have 2 components, CF(1) - the catalytic core - and CF(0) - the membrane proton channel. CF(1) has five subunits: alpha(3), beta(3), gamma(1), delta(1), epsilon(1). CF(0) has three main subunits: a, b and c.

Its subcellular location is the plastid. It localises to the chloroplast thylakoid membrane. Functionally, produces ATP from ADP in the presence of a proton gradient across the membrane. This chain is ATP synthase epsilon chain, chloroplastic, found in Calycanthus floridus var. glaucus (Eastern sweetshrub).